The primary structure comprises 67 residues: DNA-directed RNA polymerase subunit omega (67 aa).

This sequence belongs to the RNA polymerase subunit omega family. In terms of assembly, the RNAP catalytic core consists of 2 alpha, 1 beta, 1 beta' and 1 omega subunit. When a sigma factor is associated with the core the holoenzyme is formed, which can initiate transcription.

It carries out the reaction RNA(n) + a ribonucleoside 5'-triphosphate = RNA(n+1) + diphosphate. In terms of biological role, promotes RNA polymerase assembly. Latches the N- and C-terminal regions of the beta' subunit thereby facilitating its interaction with the beta and alpha subunits. In Bordetella avium (strain 197N), this protein is DNA-directed RNA polymerase subunit omega.